A 545-amino-acid polypeptide reads, in one-letter code: Glucans biosynthesis protein G (545 aa).

Residues 1–34 form the signal peptide; that stretch reads MVSLLRCQSFKPSSSLICSLALSAAFALSSSAFA. The disordered stretch occupies residues 38–60; that stretch reads KPAENKPATPVVSPPKATAQPAN.

It belongs to the OpgD/OpgG family.

Its subcellular location is the periplasm. It participates in glycan metabolism; osmoregulated periplasmic glucan (OPG) biosynthesis. Its function is as follows. Involved in the biosynthesis of osmoregulated periplasmic glucans (OPGs). This is Glucans biosynthesis protein G from Shewanella sp. (strain MR-7).